The following is a 130-amino-acid chain: Flagellar assembly factor FliW (130 aa).

This sequence belongs to the FliW family. In terms of assembly, interacts with translational regulator CsrA and flagellin(s).

The protein resides in the cytoplasm. Acts as an anti-CsrA protein, binds CsrA and prevents it from repressing translation of its target genes, one of which is flagellin. Binds to flagellin and participates in the assembly of the flagellum. The chain is Flagellar assembly factor FliW from Borrelia hermsii (strain HS1 / DAH).